A 317-amino-acid polypeptide reads, in one-letter code: Thiamine thiazole synthase (317 aa).

Substrate is bound by residues cysteine 78, 99–100 (EA), glycine 107, and valine 172. Cysteine 206 is subject to 2,3-didehydroalanine (Cys). Residues aspartate 208, histidine 223, methionine 275, and 285-287 (RMG) each bind substrate.

The protein belongs to the THI4 family. As to quaternary structure, homooctamer. Fe cation is required as a cofactor. In terms of processing, during the catalytic reaction, a sulfide is transferred from Cys-206 to a reaction intermediate, generating a dehydroalanine residue.

Its subcellular location is the cytoplasm. The protein resides in the nucleus. It carries out the reaction [ADP-thiazole synthase]-L-cysteine + glycine + NAD(+) = [ADP-thiazole synthase]-dehydroalanine + ADP-5-ethyl-4-methylthiazole-2-carboxylate + nicotinamide + 3 H2O + 2 H(+). Its function is as follows. Involved in biosynthesis of the thiamine precursor thiazole. Catalyzes the conversion of NAD and glycine to adenosine diphosphate 5-(2-hydroxyethyl)-4-methylthiazole-2-carboxylic acid (ADT), an adenylated thiazole intermediate. The reaction includes an iron-dependent sulfide transfer from a conserved cysteine residue of the protein to a thiazole intermediate. The enzyme can only undergo a single turnover, which suggests it is a suicide enzyme. May have additional roles in adaptation to various stress conditions and in DNA damage tolerance. This Yarrowia lipolytica (strain CLIB 122 / E 150) (Yeast) protein is Thiamine thiazole synthase.